Consider the following 33-residue polypeptide: Photosystem II reaction center protein Psb30 (33 aa).

Residues 5–25 (LIVQLGSLALITVAGPAIIVL) form a helical membrane-spanning segment.

The protein belongs to the Psb30/Ycf12 family. As to quaternary structure, PSII is composed of 1 copy each of membrane proteins PsbA, PsbB, PsbC, PsbD, PsbE, PsbF, PsbH, PsbI, PsbJ, PsbK, PsbL, PsbM, PsbT, PsbY, PsbZ, Psb30/Ycf12, peripheral proteins of the oxygen-evolving complex and a large number of cofactors. It forms dimeric complexes.

The protein resides in the plastid. It localises to the chloroplast thylakoid membrane. Its function is as follows. A core subunit of photosystem II (PSII), probably helps stabilize the reaction center. The protein is Photosystem II reaction center protein Psb30 of Euglena stellata.